The following is a 175-amino-acid chain: ATP-dependent protease subunit HslV (175 aa).

Thr2 is an active-site residue. Na(+) is bound by residues Gly158, Cys161, and Thr164.

The protein belongs to the peptidase T1B family. HslV subfamily. As to quaternary structure, a double ring-shaped homohexamer of HslV is capped on each side by a ring-shaped HslU homohexamer. The assembly of the HslU/HslV complex is dependent on binding of ATP.

The protein resides in the cytoplasm. It catalyses the reaction ATP-dependent cleavage of peptide bonds with broad specificity.. With respect to regulation, allosterically activated by HslU binding. Its function is as follows. Protease subunit of a proteasome-like degradation complex believed to be a general protein degrading machinery. This Histophilus somni (strain 129Pt) (Haemophilus somnus) protein is ATP-dependent protease subunit HslV.